Here is a 329-residue protein sequence, read N- to C-terminus: 3'-5' exonuclease (329 aa).

The tract at residues 26–88 is disordered; the sequence is EEKPKPKKVV…MADVGTPSPE (63 aa). Positions 46 to 65 are enriched in basic and acidic residues; sequence KNLDTPEIVNKENAEVENPP. Residues S78 and S86 each carry the phosphoserine modification. Residues 130-288 enclose the 3'-5' exonuclease domain; the sequence is TEIVPMAFDM…IGQVIYREIE (159 aa). The Mg(2+) site is built by D138, E140, and D276.

The protein belongs to the WRNexo family.

The protein localises to the nucleus. Its function is as follows. Has exonuclease activity on both single-stranded and duplex templates bearing overhangs, but not blunt ended duplex DNA, and cleaves in a 3'-5' direction. Essential for the formation of DNA replication focal centers. Has an important role in maintaining genome stability. This is 3'-5' exonuclease from Drosophila mojavensis (Fruit fly).